The primary structure comprises 688 residues: Protein adenylyltransferase SelO, mitochondrial (688 aa).

A mitochondrion-targeting transit peptide spans methionine 1–leucine 23. ATP contacts are provided by glycine 132, glycine 134, arginine 135, lysine 156, aspartate 168, glycine 169, arginine 220, and arginine 227. Residue aspartate 338 is the Proton acceptor of the active site. Positions 339 and 348 each coordinate Mg(2+). Position 348 (aspartate 348) interacts with ATP.

This sequence belongs to the SELO family. The cofactor is Mg(2+). In terms of processing, forms probably one or more intrachain disulfide bridges.

The protein resides in the mitochondrion. The catalysed reaction is L-tyrosyl-[protein] + ATP = O-(5'-adenylyl)-L-tyrosyl-[protein] + diphosphate. In terms of biological role, catalyzes the transfer of adenosine 5'-monophosphate (AMP) to Tyr residues of target mitochondrial proteins (AMPylation). Involved in redox homeostasis by regulating the cellular response to oxidative stress. Regulates protein S-glutathionylation levels possibly by AMPylation of deglutathionylation enzymes such as glutaredoxins. This Saccharomyces cerevisiae (strain ATCC 204508 / S288c) (Baker's yeast) protein is Protein adenylyltransferase SelO, mitochondrial.